A 228-amino-acid chain; its full sequence is 3,4-dihydroxy-2-butanone 4-phosphate synthase (228 aa).

D-ribulose 5-phosphate is bound by residues Arg37 to Glu38, Asp42, Arg150 to Thr154, and Glu174. Glu38 contributes to the Mg(2+) binding site. His153 contacts Mg(2+).

The protein belongs to the DHBP synthase family. In terms of assembly, homodimer. Mg(2+) serves as cofactor. Mn(2+) is required as a cofactor.

It catalyses the reaction D-ribulose 5-phosphate = (2S)-2-hydroxy-3-oxobutyl phosphate + formate + H(+). The protein operates within cofactor biosynthesis; riboflavin biosynthesis; 2-hydroxy-3-oxobutyl phosphate from D-ribulose 5-phosphate: step 1/1. In terms of biological role, catalyzes the conversion of D-ribulose 5-phosphate to formate and 3,4-dihydroxy-2-butanone 4-phosphate. This Photobacterium profundum (strain SS9) protein is 3,4-dihydroxy-2-butanone 4-phosphate synthase.